Reading from the N-terminus, the 1163-residue chain is NACHT, LRR and PYD domains-containing protein 5 (1163 aa).

Composition is skewed to basic and acidic residues over residues 1–42 (MGPP…KDQG), 56–94 (PEKESKAILKARGLEEEQKSERKMTSPENDSKSIQKDQG), and 108–127 (PEKDSKAILKARGLEEEQKS). The interval 1 to 201 (MGPPEKESKA…TEADKDNGGD (201 aa)) is disordered. Residues 128–137 (ESTMSPSENV) show a composition bias toward polar residues. Residues 153–173 (ASERKMTSPENDSKSIQKDQG) are compositionally biased toward basic and acidic residues. Residues 243–565 (HTIILHGRPG…AALYYVLEGL (323 aa)) enclose the NACHT domain. 249–256 (GRPGVGKS) serves as a coordination point for ATP. LRR repeat units follow at residues 801-822 (NLKYLNLGNTPMKDDDMKLACE), 830-851 (SVETLRLDSCELTIIGYEMIST), 858-878 (RLKCLSLAKNRVGVKSMISLG), 887-906 (LLQKLILDNCGLTPASCHLL), 915-935 (NLTHLCLSNNSLGTEGVQQLC), 944-964 (ALQRLILNHCNIVDDAYGFLA), 972-993 (KLTHLSLTMNPVGDGAMKLLCE), 1001-1022 (YLQELELVDCQLTQNCCEDLAC), 1029-1050 (HLKSLDLGNNALGDKGVITLCE), 1058-1079 (SLRRLGLGACKLTSNCCEALSL), and 1086-1107 (HLNSLNLVKNDFSTSGMLKLCS).

Belongs to the NLRP family. Component of the subcortical maternal complex (SCMC), at least composed of NLRP5, KHDC3, OOEP, and TLE6. Within the complex, interacts with OOEP, KHDC3 and TLE6. The SCMC may facilitate translocation of its components between the nuclear and cytoplasmic compartments. As part of the SCMC interacts with the SCMC-associated protein ZBED3. As part of the SCMC interacts with the SCMC-associated protein CFL1/Cofilin-1. Interacts with PRKCE. Interacts with TUBB3 at cytoskeleton microtubules. In terms of processing, phosphorylated by PRKCE.

The protein resides in the cytoplasm. Its subcellular location is the cytoplasmic vesicle. The protein localises to the secretory vesicle. It localises to the cortical granule. It is found in the mitochondrion. The protein resides in the nucleus. Its subcellular location is the nucleolus. The protein localises to the golgi apparatus. Its function is as follows. Component of the subcortical maternal complex (SCMC), a multiprotein complex that plays a key role in early embryonic development. The SCMC complex is a structural constituent of cytoplasmic lattices, which consist in fibrous structures found in the cytoplasm of oocytes and preimplantation embryos. They are required to store maternal proteins critical for embryonic development, such as proteins that control epigenetic reprogramming of the preimplantation embryo, and prevent their degradation or activation. Required for the localization of cortical granules to the cortex of oocytes, via association with the cortical actin scaffold. Required for cortical actin clearance prior to oocyte exocytosis and prevention of polyspermy. Involved in regulating post-fertilization Ca(2+) release and endoplasmic reticulum storage (ER) storage via regulation of cellular localization. May be involved in the localization of mitochondria to the cytoplasm and perinuclear region in oocytes and early stage embryos, independent of its role in CPL formation. This chain is NACHT, LRR and PYD domains-containing protein 5, found in Mus musculus (Mouse).